The primary structure comprises 233 residues: Small ribosomal subunit protein uS2 (233 aa).

Belongs to the universal ribosomal protein uS2 family.

The protein is Small ribosomal subunit protein uS2 of Prochlorococcus marinus (strain MIT 9312).